The chain runs to 793 residues: Translocase of chloroplast 90, chloroplastic (793 aa).

A disordered region spans residues 22–59 (LGSDPFFRDPHQEQDNHSQAPAAPQPVTLSEPPCSTSS). The span at 27–37 (FFRDPHQEQDN) shows a compositional bias: basic and acidic residues. The stretch at 130–157 (LIRAEESELKNVKLRQDRAKALAREQES) forms a coiled coil. The region spanning 164–394 (DFSLRILVLG…FRDSIGLGQP (231 aa)) is the AIG1-type G domain. The G1 stretch occupies residues 173–180 (GKTGVGKS). GTP is bound by residues 176–181 (GVGKSA) and 195–200 (DAFRPG). Ser180 contributes to the Mg(2+) binding site. The segment at 195-198 (DAFR) is homodimerization. Residues 199–203 (PGTDR) form a G2 region. The interval 220-223 (DTPG) is G3. Positions 259–264 (RLDMID) are homodimerization. A helical membrane pass occupies residues 279–297 (IFGAAIWLNTILVMTHSAA). The G4 stretch occupies residues 293-296 (THSA). GTP is bound by residues His294 and 341–342 (EN). The tract at residues 341 to 343 (ENH) is G5. Coiled coils occupy residues 410-442 (LRRRLSSGADETEKEIDKLLNLDLEEEDEYDQL) and 477-503 (KKQLKEECRRRRDEKLVEEENLEDTEQ).

The protein belongs to the TRAFAC class TrmE-Era-EngA-EngB-Septin-like GTPase superfamily. AIG1/Toc34/Toc159-like paraseptin GTPase family. TOC159 subfamily. Homodimer. Part of the TOC core complex that includes 1 protein for the specific recognition of transit peptides surrounded by a ring composed of four proteins forming translocation channels, and four to five GTP-binding proteins providing energy. This core complex can interact with components of the TIC complex to form a larger import complex. Chloroplastic protein precursor such as prSS (precursor of the RuBisCO small subunit) interacts with these complexes. The TOC complex contains a specific subset of polar lipids such as digalactosyldiacylglyceride (DGDG), phosphatidylcholine (PC) and phosphatidylglycerol (PG). Interacts with TOC33 and TOC75. The cofactor is Mg(2+). As to expression, expressed in seedlings, leaves, flowers, and roots.

Its subcellular location is the plastid. It is found in the chloroplast outer membrane. The protein resides in the cytoplasm. Its function is as follows. GTPase involved in protein precursor import into chloroplasts. Seems to recognize chloroplast-destined precursor proteins and regulate their presentation to the translocation channel through GTP hydrolysis. Probably specialized in the import of nuclear encoded photosynthetic preproteins from the cytoplasm to the chloroplast. The chain is Translocase of chloroplast 90, chloroplastic (TOC90) from Arabidopsis thaliana (Mouse-ear cress).